The sequence spans 418 residues: L-methionine/branched-chain amino acid exporter YjeH (418 aa).

The Periplasmic segment spans residues 1–15; it reads MSGLKQELGLAQGIG. A helical transmembrane segment spans residues 16 to 36; the sequence is LLSTSLLGTGVFAVPALAALV. The Cytoplasmic portion of the chain corresponds to 37 to 41; it reads AGNNS. The chain crosses the membrane as a helical span at residues 42 to 62; it reads LWAWPVLIILVFPIAIVFAIL. The Periplasmic portion of the chain corresponds to 63-89; that stretch reads GRHYPSAGGVAHFVGMAFGSRLERVTG. The helical transmembrane segment at 90-110 threads the bilayer; it reads WLFLSVIPVGLPAALQIAAGF. At 111 to 113 the chain is on the cytoplasmic side; sequence GQA. A helical membrane pass occupies residues 114–134; the sequence is MFGWHSWQLLLAELGTLALVW. Over 135–147 the chain is Periplasmic; the sequence is YIGTRGASSSANL. Residues 148–168 traverse the membrane as a helical segment; that stretch reads QTVIAGLIVALIVAIWWAGDI. At 169-182 the chain is on the cytoplasmic side; that stretch reads KPANIPFPAPGNIE. The helical transmembrane segment at 183-203 threads the bilayer; that stretch reads LTGLFAALSVMFWCFVGLEAF. Topologically, residues 204 to 219 are periplasmic; that stretch reads AHLASEFKNPERDFPR. The helical transmembrane segment at 220–240 threads the bilayer; it reads ALMIGLLLAGLVYWGCTVVVL. Topologically, residues 241 to 257 are cytoplasmic; the sequence is HFDAYGEKMAAAASLPK. Residues 258-278 traverse the membrane as a helical segment; it reads IVVQLFGVGALWIACVIGYLA. The Periplasmic portion of the chain corresponds to 279 to 317; that stretch reads CFASLNIYIQSFARLVWSQAQHNPDHYLARLSSRHIPNN. The chain crosses the membrane as a helical span at residues 318–338; sequence ALNAVLGCCVVSTLVIHALEI. Over 339–341 the chain is Cytoplasmic; it reads NLD. Residues 342–362 form a helical membrane-spanning segment; sequence ALIIYANGIFIMIYLLCMLAG. The Periplasmic segment spans residues 363–378; the sequence is CKLLQGRYRLLAVVGG. The helical transmembrane segment at 379–399 threads the bilayer; the sequence is LLCVLLLAMVGWKSLYALIML. At 400–418 the chain is on the cytoplasmic side; sequence AGLWLLLPKRKTPENGITT.

It belongs to the amino acid-polyamine-organocation (APC) superfamily. Amino acid efflux (AAE) (TC 2.A.3.13) family.

The protein localises to the cell inner membrane. The enzyme catalyses L-methionine(in) + H(+)(out) = L-methionine(out) + H(+)(in). It catalyses the reaction L-leucine(in) + H(+)(out) = L-leucine(out) + H(+)(in). It carries out the reaction L-isoleucine(in) + H(+)(out) = L-isoleucine(out) + H(+)(in). The catalysed reaction is L-valine(in) + H(+)(out) = L-valine(out) + H(+)(in). Efflux of L-methionine is inhibited by the proton ionophore carbonyl cyanide m-chlorophenylhydrazone (CCCP). In terms of biological role, catalyzes the efflux of L-methionine, L-leucine, L-isoleucine and L-valine. Activity is dependent on electrochemical potential. The sequence is that of L-methionine/branched-chain amino acid exporter YjeH (yjeH) from Escherichia coli (strain K12).